The chain runs to 233 residues: Small ribosomal subunit protein uS3 (233 aa).

One can recognise a KH type-2 domain in the interval 39 to 107 (VRKYLTKELE…PAQINIAEVR (69 aa)). A disordered region spans residues 214 to 233 (VEQPEKPSAQPKKQQRKGRK).

It belongs to the universal ribosomal protein uS3 family. In terms of assembly, part of the 30S ribosomal subunit. Forms a tight complex with proteins S10 and S14.

Binds the lower part of the 30S subunit head. Binds mRNA in the 70S ribosome, positioning it for translation. The polypeptide is Small ribosomal subunit protein uS3 (Pectobacterium atrosepticum (strain SCRI 1043 / ATCC BAA-672) (Erwinia carotovora subsp. atroseptica)).